The following is a 423-amino-acid chain: Osteomodulin (423 aa).

The N-terminal stretch at 1 to 20 is a signal peptide; the sequence is MGFLSPIYVLFFCFGVRVYC. Sulfotyrosine is present on residues Tyr22, Tyr25, Tyr31, Tyr39, Tyr51, and Tyr77. An LRRNT domain is found at 53–91; the sequence is VPFYNNILGCAKECFCPTNFPTSMYCDNRKLKTIPIIPM. LRR repeat units lie at residues 92 to 113, 116 to 129, 142 to 164, 165 to 184, 187 to 207, 213 to 233, 234 to 255, 258 to 279, 281 to 294, 301 to 322, and 331 to 353; these read HIQQ…SFIN, HLKE…KIKS, NLQQ…PKSL, ERLL…AMDG, NVTM…KEKT, KLMQ…GLPS, SLMY…YFDK, KLHA…IFNL, NLIE…KLKQ, NLEH…MICP, and HLTY…IFFC. N-linked (GlcNAc...) asparagine glycans are attached at residues Asn113 and Asn121. An N-linked (GlcNAc...) asparagine glycan is attached at Asn187. Asn242 and Asn278 each carry an N-linked (GlcNAc...) asparagine glycan. Asn316 is a glycosylation site (N-linked (GlcNAc...) asparagine). Cysteines 321 and 353 form a disulfide. Residues 381-406 are disordered; that stretch reads RSYQEEEEEDDHDSQDNTLEGQEVSD. A sulfotyrosine mark is found at Tyr413 and Tyr414.

Belongs to the small leucine-rich proteoglycan (SLRP) family. SLRP class II subfamily. As to quaternary structure, binds the alpha(V)beta(3)-integrin. In terms of processing, glycosylated; contains keratan sulfate. In terms of tissue distribution, bone specific.

Its subcellular location is the secreted. It localises to the extracellular space. The protein resides in the extracellular matrix. Its function is as follows. May be implicated in biomineralization processes. Has a function in binding of osteoblasts via the alpha(V)beta(3)-integrin. This Mus musculus (Mouse) protein is Osteomodulin (Omd).